The following is a 71-amino-acid chain: R-phycoerythrin gamma-1 chain, chloroplastic (71 aa).

Phycourobilin-binding residues include C25 and C34. C49 contacts (2R,3E)-phycoerythrobilin. A phycourobilin-binding site is contributed by C58.

Heteromer of 6 alpha, 6 beta and 1 gamma chains. In terms of processing, contains four covalently linked bilin chromophores.

The protein localises to the plastid. It localises to the chloroplast thylakoid membrane. Its function is as follows. Critical for the incorporation of phycoerythrin in the phycobilisome complex. This is R-phycoerythrin gamma-1 chain, chloroplastic from Gastroclonium coulteri (Red alga).